The chain runs to 1313 residues: Mitogen-activated protein kinase kinase kinase 15 (1313 aa).

The tract at residues Met-1 to Arg-58 is disordered. Low complexity predominate over residues Val-28–Gly-43. Residues Ala-44–Pro-57 show a composition bias toward gly residues. Residues Asn-652–Leu-908 enclose the Protein kinase domain. Residues Leu-658–Val-666 and Lys-681 contribute to the ATP site. The active-site Proton acceptor is the Asp-773. Residues Glu-939 to Gln-958 are disordered. Over residues Ala-942–Ser-955 the composition is skewed to polar residues. Residue Ser-994 is modified to Phosphoserine. The stretch at Gln-1179–Ser-1225 forms a coiled coil.

This sequence belongs to the protein kinase superfamily. STE Ser/Thr protein kinase family. MAP kinase kinase kinase subfamily. Mg(2+) serves as cofactor. As to expression, isoform 2 and isoform 3 are widely expressed. Isoform 2 highest levels are observed in fetal brain, and isoform 3 highest levels in pancreas, peripheral blood leukocytes, fetal brain and spleen.

The enzyme catalyses L-seryl-[protein] + ATP = O-phospho-L-seryl-[protein] + ADP + H(+). The catalysed reaction is L-threonyl-[protein] + ATP = O-phospho-L-threonyl-[protein] + ADP + H(+). With respect to regulation, contains an N-terminal autoinhibitory domain. Activated by phosphorylation at Thr-812, inhibited by phosphorylation at Ser-924 and Ser-994. In terms of biological role, serine/threonine kinase which acts as a component of the MAP kinase signal transduction pathway. Once activated, acts as an upstream activator of the p38 MAPK signal transduction cascade through the phosphorylation and activation of several MAP kinase kinases. May function in a signal transduction pathway that is activated by various cell stresses and leads to apoptosis. Involved in phosphorylation of WNK4 in response to osmotic stress or hypotonic low-chloride stimulation via the p38 MAPK signal transduction cascade. This chain is Mitogen-activated protein kinase kinase kinase 15 (MAP3K15), found in Homo sapiens (Human).